A 355-amino-acid chain; its full sequence is S-adenosylmethionine:tRNA ribosyltransferase-isomerase (355 aa).

It belongs to the QueA family. Monomer.

The protein resides in the cytoplasm. The enzyme catalyses 7-aminomethyl-7-carbaguanosine(34) in tRNA + S-adenosyl-L-methionine = epoxyqueuosine(34) in tRNA + adenine + L-methionine + 2 H(+). It functions in the pathway tRNA modification; tRNA-queuosine biosynthesis. In terms of biological role, transfers and isomerizes the ribose moiety from AdoMet to the 7-aminomethyl group of 7-deazaguanine (preQ1-tRNA) to give epoxyqueuosine (oQ-tRNA). The protein is S-adenosylmethionine:tRNA ribosyltransferase-isomerase of Burkholderia orbicola (strain AU 1054).